Reading from the N-terminus, the 744-residue chain is Junctophilin-3 (744 aa).

Topologically, residues 1–723 (MSSGGRFNFD…LKSSTGSAPI (723 aa)) are cytoplasmic. MORN repeat units follow at residues 15–37 (YCGG…KGQG), 39–60 (YTGS…SGNT), 61–82 (YQGT…GKWV), 83–105 (YKGE…GNGA), 107–129 (YEGT…DGGT), and 130–152 (YQGQ…PYGM). The segment at 230 to 252 (SKSSLASQRSKQSSFRSEAGMST) is disordered. The segment covering 231–244 (KSSLASQRSKQSSF) has biased composition (low complexity). 2 MORN repeats span residues 288-310 (YVGE…DGLK) and 311-333 (YEGE…DGTK). The residue at position 440 (serine 440) is a Phosphoserine. Threonine 451 carries the post-translational modification Phosphothreonine. 2 disordered regions span residues 451–603 (TPLQ…LLEP) and 624–677 (CPQD…ESLR). Serine 457 carries the post-translational modification Phosphoserine. At threonine 471 the chain carries Phosphothreonine. Serine 475 and serine 506 each carry phosphoserine. Phosphoserine is present on residues serine 699 and serine 706. The helical; Anchor for type IV membrane protein transmembrane segment at 724 to 744 (LVVMVILLNIGVAILFINFFI) threads the bilayer.

It belongs to the junctophilin family. In terms of tissue distribution, specifically expressed in brain. Highest levels in the olfactory tubercle, caudate putamen, nucleus accumbens, hippocampal formation, piriform cortex and cerebellar cortex. Expressed in disctete neurons sites. In hippocampal formation, expressed in dendrites of hippocampal pyramidal and denate granule cells. In cerebellum, it is highly expressed in Purkinge cells, while it is weakly expressed in granular cells.

The protein localises to the cell membrane. The protein resides in the endoplasmic reticulum membrane. Its function is as follows. Junctophilins contribute to the formation of junctional membrane complexes (JMCs) which link the plasma membrane with the endoplasmic or sarcoplasmic reticulum in excitable cells. Provides a structural foundation for functional cross-talk between the cell surface and intracellular calcium release channels. JPH3 is brain-specific and appears to have an active role in certain neurons involved in motor coordination and memory. This is Junctophilin-3 (Jph3) from Mus musculus (Mouse).